The following is a 402-amino-acid chain: F-box protein At4g22390 (402 aa).

Residues 1-49 (MAECPTDLINEMFLRLRATTLVKCRVLSKPCFSLIDSPEFVSSHLRRRL) form the F-box domain.

This is F-box protein At4g22390 from Arabidopsis thaliana (Mouse-ear cress).